The following is a 565-amino-acid chain: MSGRSKRESRGSTRGKRESESRGSSGRVKRERDREREPEAASSRGSPVRVKREFEPASAREAPASVVPFVRVKREREVDEDSEPEREVRAKNGRVDSEDRRSRHCPYLDTINRSVLDFDFEKLCSISLSHINAYACLVCGKYFQGRGLKSHAYIHSVQFSHHVFLNLHTLKFYCLPDNYEIIDSSLEDITYVLKPTFTKQQIANLDKQAKLSRAYDGTTYLPGIVGLNNIKANDYANAVLQALSNVPPLRNYFLEEDNYKNIKRPPGDIMFLLVQRFGELMRKLWNPRNFKAHVSPHEMLQAVVLCSKKTFQITKQGDGVDFLSWFLNALHSALGGTKKKKKTIVTDVFQGSMRIFTKKLPHPDLPAEEKEQLLHNDEYQETMVESTFMYLTLDLPTAPLYKDEKEQLIIPQVPLFNILAKFNGITEKEYKTYKENFLKRFQLTKLPPYLIFCIKRFTKNNFFVEKNPTIVNFPITNVDLREYLSEEVQAVHKNTTYDLIANIVHDGKPSEGSYRIHVLHHGTGKWYELQDLQVTDILPQMITLSEAYIQIWKRRDNDETNQQGA.

Basic and acidic residues-rich tracts occupy residues 1–21 and 28–39; these read MSGRSKRESRGSTRGKRESES and VKRERDREREPE. Disordered stretches follow at residues 1–61 and 75–95; these read MSGR…SARE and EREVDEDSEPEREVRAKNGRV. A Phosphoserine modification is found at serine 46. Lysine 51 is covalently cross-linked (Glycyl lysine isopeptide (Lys-Gly) (interchain with G-Cter in SUMO2)). Serine 82 bears the Phosphoserine mark. Over residues 85-95 the composition is skewed to basic and acidic residues; sequence EREVRAKNGRV. Residues 103-200 form a UBP-type; degenerate zinc finger; sequence RHCPYLDTIN…YVLKPTFTKQ (98 aa). Residues cysteine 136, cysteine 139, histidine 155, and histidine 161 each contribute to the Zn(2+) site. The region spanning 225–555 is the USP domain; sequence VGLNNIKAND…EAYIQIWKRR (331 aa).

Belongs to the peptidase C19 family. The U4/U6-U5 tri-snRNP complex is a building block of the precatalytic spliceosome (spliceosome B complex). Component of the U4/U6-U5 tri-snRNP complex composed of the U4, U6 and U5 snRNAs and at least PRPF3, PRPF4, PRPF6, PRPF8, PRPF31, SNRNP200, TXNL4A, SNRNP40, SNRPB, SNRPD1, SNRPD2, SNRPD3, SNRPE, SNRPF, SNRPG, DDX23, CD2BP2, PPIH, SNU13, EFTUD2, SART1 and USP39, plus LSM2, LSM3, LSM4, LSM5, LSM6, LSM7 and LSM8.

Its subcellular location is the nucleus. It catalyses the reaction Thiol-dependent hydrolysis of ester, thioester, amide, peptide and isopeptide bonds formed by the C-terminal Gly of ubiquitin (a 76-residue protein attached to proteins as an intracellular targeting signal).. Deubiquitinating enzyme that plays a role in many cellular processes including cellular antiviral response, epithelial morphogenesis, DNA repair or B-cell development. Plays a role in pre-mRNA splicing as a component of the U4/U6-U5 tri-snRNP, one of the building blocks of the precatalytic spliceosome. Specifically regulates immunoglobulin gene rearrangement in a spliceosome-dependent manner, which involves modulating chromatin interactions at the Igh locus and therefore plays an essential role in B-cell development. Regulates AURKB mRNA levels, and thereby plays a role in cytokinesis and in the spindle checkpoint. Regulates apoptosis and G2/M cell cycle checkpoint in response to DNA damage by deubiquitinating and stabilizing CHK2. Also plays an important role in DNA repair by controlling the recruitment of XRCC4/LIG4 to DNA double-strand breaks for non-homologous end-joining repair. Participates in antiviral activity by affecting the type I IFN signaling by stabilizing STAT1 and decreasing its 'Lys-6'-linked ubiquitination. Contributes to non-canonical Wnt signaling during epidermal differentiation. Acts as a negative regulator NF-kappa-B activation through deubiquitination of 'Lys-48'-linked ubiquitination of NFKBIA. This chain is Ubiquitin carboxyl-terminal hydrolase 39, found in Homo sapiens (Human).